The chain runs to 276 residues: Large ribosomal subunit protein uL2 (276 aa).

The segment at 221–276 (RGSAMNPNDHPHGGGEGRAPIGRKSPMTPWGKKARGVKTRDRKKASNALIIRRRTK) is disordered. Residues 252 to 276 (KKARGVKTRDRKKASNALIIRRRTK) show a composition bias toward basic residues.

The protein belongs to the universal ribosomal protein uL2 family. Part of the 50S ribosomal subunit. Forms a bridge to the 30S subunit in the 70S ribosome.

Its function is as follows. One of the primary rRNA binding proteins. Required for association of the 30S and 50S subunits to form the 70S ribosome, for tRNA binding and peptide bond formation. It has been suggested to have peptidyltransferase activity; this is somewhat controversial. Makes several contacts with the 16S rRNA in the 70S ribosome. This Aster yellows phytoplasma protein is Large ribosomal subunit protein uL2.